The sequence spans 437 residues: Coiled-coil domain-containing protein 78 (437 aa).

3 coiled-coil regions span residues H83–N114, E147–E287, and Q360–E408.

It belongs to the CCDC78 family.

Its subcellular location is the cytoplasm. The protein resides in the cytoskeleton. It is found in the microtubule organizing center. It localises to the centrosome. The protein localises to the centriole. Its subcellular location is the perinuclear region. The protein resides in the cell membrane. It is found in the sarcolemma. It localises to the sarcoplasmic reticulum. In terms of biological role, component of the deuterosome, a structure that promotes de novo centriole amplification in multiciliated cells that can generate more than 100 centrioles. Deuterosome-mediated centriole amplification occurs in terminally differentiated multiciliated cells (G1/0) and not in S phase. Essential for centriole amplification and is required for CEP152 localization to the deuterosome. This is Coiled-coil domain-containing protein 78 (Ccdc78) from Mus musculus (Mouse).